A 351-amino-acid chain; its full sequence is Phospho-N-acetylmuramoyl-pentapeptide-transferase (351 aa).

10 helical membrane passes run 17–37 (MAYA…HIIL), 62–82 (GIPT…LVFW), 85–105 (ILNV…FLGF), 124–144 (FKIY…YYFG), 161–181 (IDLG…ASNS), 190–210 (GLAI…AYLT), 230–250 (LVIF…FNAY), 254–274 (IMMG…AALI), 279–299 (ILFS…IIQV), and 328–348 (QVVI…LSTI).

The protein belongs to the glycosyltransferase 4 family. MraY subfamily. Mg(2+) serves as cofactor.

The protein localises to the cell inner membrane. It catalyses the reaction UDP-N-acetyl-alpha-D-muramoyl-L-alanyl-gamma-D-glutamyl-meso-2,6-diaminopimeloyl-D-alanyl-D-alanine + di-trans,octa-cis-undecaprenyl phosphate = di-trans,octa-cis-undecaprenyl diphospho-N-acetyl-alpha-D-muramoyl-L-alanyl-D-glutamyl-meso-2,6-diaminopimeloyl-D-alanyl-D-alanine + UMP. It participates in cell wall biogenesis; peptidoglycan biosynthesis. Its function is as follows. Catalyzes the initial step of the lipid cycle reactions in the biosynthesis of the cell wall peptidoglycan: transfers peptidoglycan precursor phospho-MurNAc-pentapeptide from UDP-MurNAc-pentapeptide onto the lipid carrier undecaprenyl phosphate, yielding undecaprenyl-pyrophosphoryl-MurNAc-pentapeptide, known as lipid I. The protein is Phospho-N-acetylmuramoyl-pentapeptide-transferase of Borrelia garinii subsp. bavariensis (strain ATCC BAA-2496 / DSM 23469 / PBi) (Borreliella bavariensis).